The sequence spans 193 residues: UPF0301 protein SCO2948 (193 aa).

This sequence belongs to the UPF0301 (AlgH) family.

This chain is UPF0301 protein SCO2948, found in Streptomyces coelicolor (strain ATCC BAA-471 / A3(2) / M145).